Consider the following 316-residue polypeptide: Methionyl-tRNA formyltransferase (316 aa).

Residue 113-116 (SLLP) coordinates (6S)-5,6,7,8-tetrahydrofolate.

The protein belongs to the Fmt family.

It carries out the reaction L-methionyl-tRNA(fMet) + (6R)-10-formyltetrahydrofolate = N-formyl-L-methionyl-tRNA(fMet) + (6S)-5,6,7,8-tetrahydrofolate + H(+). Attaches a formyl group to the free amino group of methionyl-tRNA(fMet). The formyl group appears to play a dual role in the initiator identity of N-formylmethionyl-tRNA by promoting its recognition by IF2 and preventing the misappropriation of this tRNA by the elongation apparatus. In Proteus mirabilis (strain HI4320), this protein is Methionyl-tRNA formyltransferase.